Reading from the N-terminus, the 341-residue chain is Vacuolar morphogenesis protein 7 homolog (341 aa).

The region spanning 1–115 is the PX domain; sequence MALKIKIPET…KFLNIKDESE (115 aa). Positions 214–233 are enriched in low complexity; that stretch reads NSPVAPPSASSQLNSSNPSS. The interval 214–265 is disordered; it reads NSPVAPPSASSQLNSSNPSSPFRPLSASTDKQSNTSLNRVLGKNRMPETQTT. Residues 239–251 are compositionally biased toward polar residues; sequence SASTDKQSNTSLN. In terms of domain architecture, t-SNARE coiled-coil homology spans 278-340; sequence NQTMEDQDMQ…HRTRAGLRKL (63 aa).

As to quaternary structure, possibly multimeric.

The protein resides in the vacuole. Its function is as follows. Essential for proper morphogenesis of the vacuole. May exist as structural reinforcement on the surface of the vacuolar membrane and be required for maintenance against rupture by osmotic pressure. The sequence is that of Vacuolar morphogenesis protein 7 homolog from Schizosaccharomyces pombe (strain 972 / ATCC 24843) (Fission yeast).